The primary structure comprises 90 residues: Large ribosomal subunit protein eL34 (90 aa).

Residues 38-65 (ARCGRPLGGVPRGRPPRVRRLSKTAKRP) form a disordered region. A compositionally biased stretch (basic residues) spans 51–62 (RPPRVRRLSKTA).

This sequence belongs to the eukaryotic ribosomal protein eL34 family.

This is Large ribosomal subunit protein eL34 (rpl34e) from Aeropyrum pernix (strain ATCC 700893 / DSM 11879 / JCM 9820 / NBRC 100138 / K1).